The following is a 158-amino-acid chain: Transcription factor BTF3 homolog 4 (158 aa).

Residues 33-98 (TADDKKLQSS…AEVKQITEML (66 aa)) enclose the NAC-A/B domain. The disordered stretch occupies residues 123-158 (QVLDSKASKPEDIEEEDDDVPELVGNFDEASKNEAN). A compositionally biased stretch (acidic residues) spans 134-143 (DIEEEDDDVP).

Belongs to the NAC-beta family.

This Xenopus laevis (African clawed frog) protein is Transcription factor BTF3 homolog 4 (btf3l4).